A 356-amino-acid chain; its full sequence is Nicotinate-nucleotide--dimethylbenzimidazole phosphoribosyltransferase (356 aa).

Glutamate 317 (proton acceptor) is an active-site residue.

It belongs to the CobT family. As to quaternary structure, homodimer.

It carries out the reaction 5,6-dimethylbenzimidazole + nicotinate beta-D-ribonucleotide = alpha-ribazole 5'-phosphate + nicotinate + H(+). Its pathway is nucleoside biosynthesis; alpha-ribazole biosynthesis; alpha-ribazole from 5,6-dimethylbenzimidazole: step 1/2. Functionally, catalyzes the synthesis of alpha-ribazole-5'-phosphate from nicotinate mononucleotide (NAMN) and 5,6-dimethylbenzimidazole (DMB). This is Nicotinate-nucleotide--dimethylbenzimidazole phosphoribosyltransferase from Salmonella paratyphi A (strain ATCC 9150 / SARB42).